A 102-amino-acid polypeptide reads, in one-letter code: U7-agatoxin-Ao1a (102 aa).

The first 19 residues, 1–19, serve as a signal peptide directing secretion; sequence MTQAFFFLLLVSLVASTLS. Residues 20 to 39 constitute a propeptide that is removed on maturation; that stretch reads KEFNFCPRAIDEVCPVKEKR. Trp-101 carries the tryptophan amide modification.

Belongs to the venom protein 11 family. 02 (wap-2) subfamily. Post-translationally, contains 5 disulfide bonds. As to expression, expressed by the venom gland.

The protein resides in the secreted. This chain is U7-agatoxin-Ao1a, found in Agelena orientalis (Funnel-web spider).